Consider the following 249-residue polypeptide: MSLMREMLEAGVHFGHQTRYWNPKMAPYIFGHRNKIHIINLEQTVAKYQEASKFVKQLVARGGNILFVGTKRAARELVATEAARCGMPYVDARWLGGMLTNFKTVKSSIKRLKDMEAMVADGGFERMTKKEGLLFQRELDKLNKSIGGIKDMNGLPDALFVIDVGYHKIAVAEAKVLGIPVVAVVDTNHSPDGIDHVIPGNDDSARAIALYAKGMADAVLEGREQNINGLVEEIGEGQEEFVEVQDNQA.

This sequence belongs to the universal ribosomal protein uS2 family.

The sequence is that of Small ribosomal subunit protein uS2 from Bordetella parapertussis (strain 12822 / ATCC BAA-587 / NCTC 13253).